The primary structure comprises 395 residues: Elongation factor Tu (395 aa).

The tr-type G domain occupies 10 to 205 (KPHCNIGTIG…AVDSYIPQPE (196 aa)). Residues 19–26 (GHVDHGKT) form a G1 region. 19–26 (GHVDHGKT) lines the GTP pocket. Thr26 is a Mg(2+) binding site. The tract at residues 60 to 64 (GITIA) is G2. A G3 region spans residues 81 to 84 (DCPG). GTP is bound by residues 81–85 (DCPGH) and 136–139 (NKMD). The G4 stretch occupies residues 136-139 (NKMD). The segment at 173–175 (SAL) is G5.

The protein belongs to the TRAFAC class translation factor GTPase superfamily. Classic translation factor GTPase family. EF-Tu/EF-1A subfamily. In terms of assembly, monomer.

It localises to the cytoplasm. It catalyses the reaction GTP + H2O = GDP + phosphate + H(+). GTP hydrolase that promotes the GTP-dependent binding of aminoacyl-tRNA to the A-site of ribosomes during protein biosynthesis. In Acidiphilium cryptum (strain JF-5), this protein is Elongation factor Tu.